Here is a 115-residue protein sequence, read N- to C-terminus: Pycsar effector protein TpPycTM (115 aa).

The next 2 helical transmembrane spans lie at 44-64 (IGNL…YATN) and 74-94 (VWNI…VILV).

Its subcellular location is the cell inner membrane. Functionally, pycsar (pyrimidine cyclase system for antiphage resistance) provides immunity against bacteriophage. The pyrimidine cyclase (PycC) synthesizes cyclic nucleotides in response to infection; these serve as specific second messenger signals. The signals activate the adjacent effector, leading to bacterial cell death and abortive phage infection. A clade C Pycsar system. In terms of biological role, the effector gene of a two-gene Pycsar system. Expression of this and adjacent uridylate cyclase TpPycC (AC A0A1T4LJ54) probably confers resistance to bacteriophage. The genes are probably only expressed in response to bacteriophage infection. Probably only responds to cUMP (produced by its cognate NTP cyclase), acts by impairing membrane integrity. In Treponema porcinum, this protein is Pycsar effector protein TpPycTM.